The sequence spans 67 residues: uncharacterized protein (67 aa).

This is an uncharacterized protein from Vaccinia virus (strain Copenhagen) (VACV).